The following is a 532-amino-acid chain: CTP synthase (532 aa).

The segment at 1 to 267 (MTKYIFVTGG…DDIVLEHLQL (267 aa)) is amidoligase domain. S13 contacts CTP. Residue S13 participates in UTP binding. An ATP-binding site is contributed by 14–19 (SIGKGI). L-glutamine is bound at residue Y54. D71 serves as a coordination point for ATP. Mg(2+) is bound by residues D71 and E141. CTP-binding positions include 148-150 (DIE), 188-193 (KTKPTQ), and K224. Residues 188–193 (KTKPTQ) and K224 contribute to the UTP site. Positions 292–532 (RIGLVGKYVS…DFVGAALNNK (241 aa)) constitute a Glutamine amidotransferase type-1 domain. Residue G354 coordinates L-glutamine. C381 (nucleophile; for glutamine hydrolysis) is an active-site residue. L-glutamine-binding positions include 382–385 (LGMQ), E405, and R462. Catalysis depends on residues H507 and E509.

This sequence belongs to the CTP synthase family. In terms of assembly, homotetramer.

It carries out the reaction UTP + L-glutamine + ATP + H2O = CTP + L-glutamate + ADP + phosphate + 2 H(+). The enzyme catalyses L-glutamine + H2O = L-glutamate + NH4(+). It catalyses the reaction UTP + NH4(+) + ATP = CTP + ADP + phosphate + 2 H(+). Its pathway is pyrimidine metabolism; CTP biosynthesis via de novo pathway; CTP from UDP: step 2/2. With respect to regulation, allosterically activated by GTP, when glutamine is the substrate; GTP has no effect on the reaction when ammonia is the substrate. The allosteric effector GTP functions by stabilizing the protein conformation that binds the tetrahedral intermediate(s) formed during glutamine hydrolysis. Inhibited by the product CTP, via allosteric rather than competitive inhibition. Its function is as follows. Catalyzes the ATP-dependent amination of UTP to CTP with either L-glutamine or ammonia as the source of nitrogen. Regulates intracellular CTP levels through interactions with the four ribonucleotide triphosphates. This chain is CTP synthase, found in Listeria monocytogenes serotype 4b (strain F2365).